Consider the following 178-residue polypeptide: Large ribosomal subunit protein bL25 (178 aa).

It belongs to the bacterial ribosomal protein bL25 family. CTC subfamily. Part of the 50S ribosomal subunit; part of the 5S rRNA/L5/L18/L25 subcomplex. Contacts the 5S rRNA. Binds to the 5S rRNA independently of L5 and L18.

In terms of biological role, this is one of the proteins that binds to the 5S RNA in the ribosome where it forms part of the central protuberance. This chain is Large ribosomal subunit protein bL25, found in Helicobacter pylori (strain G27).